We begin with the raw amino-acid sequence, 284 residues long: Fructosamine kinase FrlD (284 aa).

Belongs to the carbohydrate kinase PfkB family.

Its function is as follows. Catalyzes the phosphorylation of a range of fructosamines to fructosamine 6-phosphates. This is Fructosamine kinase FrlD (frlD) from Bacillus subtilis (strain 168).